A 785-amino-acid chain; its full sequence is Leucyl aminopeptidase (785 aa).

Substrate-binding positions include Glu106 and 238–242 (GAMEN). A Zn(2+)-binding site is contributed by His273. The Proton acceptor role is filled by Glu274. 2 residues coordinate Zn(2+): His277 and Glu296.

This sequence belongs to the peptidase M1 family. In terms of assembly, co-immunoprecipitates with the 60 kDa chaperonin. Zn(2+) serves as cofactor. Post-translationally, can be phosphorylated by cell extracts.

It is found in the cytoplasm. It carries out the reaction Release of an N-terminal amino acid, Xaa-|-Yaa-, in which Xaa is preferably Leu, but may be other amino acids including Pro although not Arg or Lys, and Yaa may be Pro. Amino acid amides and methyl esters are also readily hydrolyzed, but rates on arylamides are exceedingly low.. Its function is as follows. Preferentially acts as a leucyl-aminopeptidase, although it also has activity against other substrates. This chain is Leucyl aminopeptidase (ape2), found in Saccharolobus solfataricus (strain ATCC 35092 / DSM 1617 / JCM 11322 / P2) (Sulfolobus solfataricus).